The following is an 872-amino-acid chain: Alanine--tRNA ligase (872 aa).

Zn(2+)-binding residues include H563, H567, C665, and H669.

The protein belongs to the class-II aminoacyl-tRNA synthetase family. It depends on Zn(2+) as a cofactor.

It is found in the cytoplasm. The catalysed reaction is tRNA(Ala) + L-alanine + ATP = L-alanyl-tRNA(Ala) + AMP + diphosphate. In terms of biological role, catalyzes the attachment of alanine to tRNA(Ala) in a two-step reaction: alanine is first activated by ATP to form Ala-AMP and then transferred to the acceptor end of tRNA(Ala). Also edits incorrectly charged Ser-tRNA(Ala) and Gly-tRNA(Ala) via its editing domain. This Bacteroides fragilis (strain YCH46) protein is Alanine--tRNA ligase.